Reading from the N-terminus, the 120-residue chain is Large ribosomal subunit protein uL18 (120 aa).

It belongs to the universal ribosomal protein uL18 family. Part of the 50S ribosomal subunit; part of the 5S rRNA/L5/L18/L25 subcomplex. Contacts the 5S and 23S rRNAs.

In terms of biological role, this is one of the proteins that bind and probably mediate the attachment of the 5S RNA into the large ribosomal subunit, where it forms part of the central protuberance. The sequence is that of Large ribosomal subunit protein uL18 from Janthinobacterium sp. (strain Marseille) (Minibacterium massiliensis).